A 72-amino-acid polypeptide reads, in one-letter code: Large ribosomal subunit protein bL31 (72 aa).

Positions 16, 18, 38, and 41 each coordinate Zn(2+).

Belongs to the bacterial ribosomal protein bL31 family. Type A subfamily. In terms of assembly, part of the 50S ribosomal subunit. Zn(2+) is required as a cofactor.

Functionally, binds the 23S rRNA. The polypeptide is Large ribosomal subunit protein bL31 (Francisella tularensis subsp. holarctica (strain LVS)).